A 527-amino-acid polypeptide reads, in one-letter code: Peptide chain release factor 3 (527 aa).

The tr-type G domain occupies 9–277 (AKRRTFAIIS…AVVDWAPLPL (269 aa)). GTP is bound by residues 18–25 (SHPDAGKT), 86–90 (DTPGH), and 140–143 (NKLD).

Belongs to the TRAFAC class translation factor GTPase superfamily. Classic translation factor GTPase family. PrfC subfamily.

It localises to the cytoplasm. Increases the formation of ribosomal termination complexes and stimulates activities of RF-1 and RF-2. It binds guanine nucleotides and has strong preference for UGA stop codons. It may interact directly with the ribosome. The stimulation of RF-1 and RF-2 is significantly reduced by GTP and GDP, but not by GMP. The chain is Peptide chain release factor 3 from Pseudomonas fluorescens (strain ATCC BAA-477 / NRRL B-23932 / Pf-5).